The following is a 372-amino-acid chain: MLRSMWNFLKRHKKKCIFLGTVLGGVYILGKYGQKKLREIQEREAAEYIAQARRQYHFESNQRTCNMTVLSMLPTLREALMQQLNSESLTALLKNRPSNKLEIWEDLKIISFTRSIVAVYSTCMLVVLLRVQLNIIGGYIYLDNATVGKNGTSILAPPDVQQQYLSSIQHLLGDGLTELVTVIKQAVQRILGSISLKHSLSLLDLEQKLKEIRTLVEQHRSCWNDKDASKSSLCHYMMPDEETPLAAQAYGLSPRDITTIKLLNETRDMLESPDFSTVLNTCLNRGFSRLLDNMAEFFRPTEQDLQHGNSINSLSSVSLPLAKIIPIVNGQIHSVCSETPSHFVQDLLMMEQVKDFAANVYEAFSTPQQLEK.

The Cytoplasmic portion of the chain corresponds to 1-15 (MLRSMWNFLKRHKKK). The tract at residues 1–45 (MLRSMWNFLKRHKKKCIFLGTVLGGVYILGKYGQKKLREIQEREA) is targeting to peroxisomes. A helical transmembrane segment spans residues 16 to 36 (CIFLGTVLGGVYILGKYGQKK). The Peroxisomal segment spans residues 37–116 (LREIQEREAA…LKIISFTRSI (80 aa)). A helical transmembrane segment spans residues 117–140 (VAVYSTCMLVVLLRVQLNIIGGYI). Residues 120 to 136 (YSTCMLVVLLRVQLNII) are interaction with PEX19. The Cytoplasmic portion of the chain corresponds to 141-372 (YLDNATVGKN…AFSTPQQLEK (232 aa)).

Belongs to the peroxin-3 family. Interacts with PEX19.

It is found in the peroxisome membrane. Its function is as follows. Involved in peroxisome biosynthesis and integrity. Assembles membrane vesicles before the matrix proteins are translocated. As a docking factor for PEX19, is necessary for the import of peroxisomal membrane proteins in the peroxisomes. In Rattus norvegicus (Rat), this protein is Peroxisomal biogenesis factor 3 (Pex3).